Here is a 182-residue protein sequence, read N- to C-terminus: Ribosome-recycling factor (182 aa).

This sequence belongs to the RRF family.

Its subcellular location is the cytoplasm. Its function is as follows. Responsible for the release of ribosomes from messenger RNA at the termination of protein biosynthesis. May increase the efficiency of translation by recycling ribosomes from one round of translation to another. This Prochlorococcus marinus (strain AS9601) protein is Ribosome-recycling factor.